A 258-amino-acid chain; its full sequence is Protein SAWADEE HOMEODOMAIN HOMOLOG 1 (258 aa).

The segment at 138–244 (AWYDVSSFLT…LVRYELDNTE (107 aa)) is SAWADEE domain. Zn(2+)-binding residues include Cys-191, His-225, Cys-230, and Cys-232.

In terms of assembly, associates with the RNA polymerase IV (Pol IV) complex. Interacts with NRPD1, NRPD2, NRPD3, NRPD3B, CLSY1 and CLSY2.

The protein localises to the nucleus. In terms of biological role, involved in RNA-directed DNA methylation (RdDM). Required for the silencing of some endogenous RdDM targets and accumulation of 24-nt siRNAs, but not for the production of Pol V-dependent transcripts. Functions in transcriptional silencing through both DNA methylation-dependent and -independent pathways. Required for both maintenance and de-novo DNA methylation. Plays a role in the recruitment of Pol IV to genomic regions associated with K9 methylated histone H3 that are targets for RdDM. This is Protein SAWADEE HOMEODOMAIN HOMOLOG 1 (SHH1) from Arabidopsis thaliana (Mouse-ear cress).